The chain runs to 99 residues: CLAVATA3/ESR (CLE)-related protein 11 (99 aa).

A signal peptide spans 1–31 (MTKQPKPCSFLFHISLLSALFVFLLISFAFT). Residues Pro-91 and Pro-94 each carry the hydroxyproline modification. Pro-94 carries O-linked (Ara...) hydroxyproline glycosylation.

It belongs to the CLV3/ESR signal peptide family. Post-translationally, the O-glycosylation (arabinosylation) of the hydroxyproline Pro-94 enhances binding affinity of the CLE11p peptide for its receptor. Mostly expressed in seedlings, roots and siliques, and, to a lower extent, in leaves, flowers, stems and apex.

The protein localises to the secreted. It is found in the extracellular space. In terms of biological role, extracellular signal peptide that regulates cell fate. Represses root apical meristem maintenance. Regulates the transition of protophloem cells from proliferation to differentiation, thus impinging on postembryonic growth capacity of the root meristem; this signaling pathway requires CRN and CLV2. The protein is CLAVATA3/ESR (CLE)-related protein 11 of Arabidopsis thaliana (Mouse-ear cress).